Consider the following 310-residue polypeptide: Tagatose-6-phosphate kinase (310 aa).

The protein belongs to the carbohydrate kinase PfkB family. LacC subfamily.

The catalysed reaction is D-tagatofuranose 6-phosphate + ATP = D-tagatofuranose 1,6-bisphosphate + ADP + H(+). It participates in carbohydrate metabolism; D-tagatose 6-phosphate degradation; D-glyceraldehyde 3-phosphate and glycerone phosphate from D-tagatose 6-phosphate: step 1/2. The sequence is that of Tagatose-6-phosphate kinase from Streptococcus uberis (strain ATCC BAA-854 / 0140J).